Consider the following 955-residue polypeptide: Kinesin-like protein KIN-14L (955 aa).

The region spanning 19–140 (AARRFQAVQW…CILGLKAYHE (122 aa)) is the Calponin-homology (CH) domain. Residues 363-685 (NIRVYCRVRP…LKFAQRVSTV (323 aa)) form the Kinesin motor domain. An ATP-binding site is contributed by 445-452 (GQTGSGKT). The stretch at 692-719 (AHKETREVMHLKEQIENLKRALGTEEWN) forms a coiled coil. Positions 878 to 942 (RKENIPADPR…GKPIENGKKD (65 aa)) are disordered. The span at 894–916 (NNFSHIKSPDTSNAKTMRRQSLT) shows a compositional bias: polar residues.

It belongs to the TRAFAC class myosin-kinesin ATPase superfamily. Kinesin family. KIN-14 subfamily.

This chain is Kinesin-like protein KIN-14L, found in Arabidopsis thaliana (Mouse-ear cress).